The chain runs to 160 residues: ATP synthase subunit b, chloroplastic (160 aa).

A helical transmembrane segment spans residues 12 to 31 (NVINIAILVVILIRFARQVV).

It belongs to the ATPase B chain family. As to quaternary structure, F-type ATPases have 2 components, F(1) - the catalytic core - and F(0) - the membrane proton channel. F(1) has five subunits: alpha(3), beta(3), gamma(1), delta(1), epsilon(1). F(0) has four main subunits: a(1), b(1), b'(1) and c(10-14). The alpha and beta chains form an alternating ring which encloses part of the gamma chain. F(1) is attached to F(0) by a central stalk formed by the gamma and epsilon chains, while a peripheral stalk is formed by the delta, b and b' chains.

It is found in the plastid. The protein resides in the chloroplast thylakoid membrane. In terms of biological role, f(1)F(0) ATP synthase produces ATP from ADP in the presence of a proton or sodium gradient. F-type ATPases consist of two structural domains, F(1) containing the extramembraneous catalytic core and F(0) containing the membrane proton channel, linked together by a central stalk and a peripheral stalk. During catalysis, ATP synthesis in the catalytic domain of F(1) is coupled via a rotary mechanism of the central stalk subunits to proton translocation. Component of the F(0) channel, it forms part of the peripheral stalk, linking F(1) to F(0). This chain is ATP synthase subunit b, chloroplastic, found in Cyanidioschyzon merolae (strain NIES-3377 / 10D) (Unicellular red alga).